We begin with the raw amino-acid sequence, 48 residues long: Light-harvesting polypeptide B-885 beta-1 chain (48 aa).

The Cytoplasmic portion of the chain corresponds to 1–20; that stretch reads AEDRKSLSGLTEQEAQEFGT. A helical transmembrane segment spans residues 21–43; that stretch reads LYTQGVAFVAVIAVVAHALVWAW. An a bacteriochlorophyll-binding site is contributed by His37. Over 44–48 the chain is Periplasmic; it reads RPWLQ.

This sequence belongs to the antenna complex beta subunit family. In terms of assembly, the core complex is formed by different alpha and beta chains, binding bacteriochlorophyll molecules, and arranged most probably in tetrameric structures disposed around the reaction center. The non-pigmented gamma chains may constitute additional components.

It is found in the cell inner membrane. Functionally, antenna complexes are light-harvesting systems, which transfer the excitation energy to the reaction centers. In Rhodocyclus tenuis (Rhodospirillum tenue), this protein is Light-harvesting polypeptide B-885 beta-1 chain.